Consider the following 586-residue polypeptide: A-type ATP synthase subunit A (586 aa).

ATP is bound at residue 232–239 (GPFGSGKT).

The protein belongs to the ATPase alpha/beta chains family. Has multiple subunits with at least A(3), B(3), C, D, E, F, H, I and proteolipid K(x).

The protein resides in the cell membrane. It catalyses the reaction ATP + H2O + 4 H(+)(in) = ADP + phosphate + 5 H(+)(out). Component of the A-type ATP synthase that produces ATP from ADP in the presence of a proton gradient across the membrane. The A chain is the catalytic subunit. The chain is A-type ATP synthase subunit A from Methanococcus maripaludis (strain C5 / ATCC BAA-1333).